The following is a 662-amino-acid chain: Probable quinol oxidase subunit 1 (662 aa).

The next 2 helical transmembrane spans lie at 14–34 (WMITMAQIGAPFLVIGLIAVI) and 58–78 (LMYLICAVLMFVRGGIDALLL). Fe(II)-heme a is bound at residue His-102. 8 helical membrane passes run 103–123 (GVIMIIFMAMPFVFGLWNVVV), 140–160 (ISFWLFFVGMILFNLSFIIGG), 187–207 (VAIQISGIGTLMTGINFFVTI), 228–248 (FITTLIVILAFPVFTVVLALM), 273–293 (FFWVWGHPEVYIVILPAFGIY), 311–331 (MVWATAGIAFLSFLVWVHHFF), 336–356 (GALINSFFSISTMLIGVPTGV), and 376–396 (MLFSLAFIPNFLLGGVTGVML). Residues His-279, Tyr-283, His-328, and His-329 each contribute to the Cu cation site. The 1'-histidyl-3'-tyrosine (His-Tyr) cross-link spans 279-283 (HPEVY). Residue His-414 coordinates heme a3. Helical transmembrane passes span 415 to 435 (FHYTLVTGVVFACLAGLIFWY), 451 to 471 (CFWLFMIGFNVCFLPQFILGL), 492 to 512 (VISTIGALLMAVGFLFLVVSI), 586 to 605 (THTGVIMGIFMLLGGFFLIF), and 609 to 628 (IPAAICLVGILGSLVYQSFV). His-416 serves as a coordination point for Fe(II)-heme a.

The protein belongs to the heme-copper respiratory oxidase family. It depends on Cu cation as a cofactor. Requires ferriheme a as cofactor. Heme A3. is required as a cofactor.

It is found in the cell membrane. It catalyses the reaction 2 a quinol + O2 = 2 a quinone + 2 H2O. The protein operates within energy metabolism; oxidative phosphorylation. Functionally, catalyzes quinol oxidation with the concomitant reduction of oxygen to water. This chain is Probable quinol oxidase subunit 1 (qoxB), found in Staphylococcus haemolyticus (strain JCSC1435).